The primary structure comprises 420 residues: Gamma-glutamyl phosphate reductase (420 aa).

This sequence belongs to the gamma-glutamyl phosphate reductase family.

The protein localises to the cytoplasm. The enzyme catalyses L-glutamate 5-semialdehyde + phosphate + NADP(+) = L-glutamyl 5-phosphate + NADPH + H(+). It functions in the pathway amino-acid biosynthesis; L-proline biosynthesis; L-glutamate 5-semialdehyde from L-glutamate: step 2/2. Its function is as follows. Catalyzes the NADPH-dependent reduction of L-glutamate 5-phosphate into L-glutamate 5-semialdehyde and phosphate. The product spontaneously undergoes cyclization to form 1-pyrroline-5-carboxylate. This Cereibacter sphaeroides (strain ATCC 17023 / DSM 158 / JCM 6121 / CCUG 31486 / LMG 2827 / NBRC 12203 / NCIMB 8253 / ATH 2.4.1.) (Rhodobacter sphaeroides) protein is Gamma-glutamyl phosphate reductase.